The following is a 301-amino-acid chain: WD repeat-containing protein SL1-17 (301 aa).

WD repeat units lie at residues 11–54 (AHKE…LKCL), 59–98 (GHRL…LTKT), 101–140 (GDPA…KEGS), 143–182 (LEGK…VQFL), 184–223 (GHAT…LVIP), 227–266 (GHKG…EKHC), and 269–300 (THED…IYQC).

The polypeptide is WD repeat-containing protein SL1-17 (Schistosoma mansoni (Blood fluke)).